A 234-amino-acid chain; its full sequence is Large ribosomal subunit protein uL1 (234 aa).

The protein belongs to the universal ribosomal protein uL1 family. Part of the 50S ribosomal subunit.

In terms of biological role, binds directly to 23S rRNA. The L1 stalk is quite mobile in the ribosome, and is involved in E site tRNA release. Functionally, protein L1 is also a translational repressor protein, it controls the translation of the L11 operon by binding to its mRNA. The chain is Large ribosomal subunit protein uL1 from Erwinia tasmaniensis (strain DSM 17950 / CFBP 7177 / CIP 109463 / NCPPB 4357 / Et1/99).